A 956-amino-acid chain; its full sequence is Glutamyl aminopeptidase (956 aa).

The Cytoplasmic segment spans residues 1 to 21; it reads MILEERSSWEGSKRYCIKTKH. A helical; Signal-anchor for type II membrane protein transmembrane segment spans residues 22-42; it reads VAIICAVVVAVGLIVGLSVGL. At 43–956 the chain is on the extracellular side; it reads TRSCDSTEGM…IRNWFLDLNG (914 aa). A disordered region spans residues 48–87; sequence STEGMTQGTTQGTTQAPSHLPPVTSPPEDQGVCPASEDES. Over residues 49-62 the composition is skewed to low complexity; the sequence is TEGMTQGTTQGTTQ. N-linked (GlcNAc...) asparagine glycosylation is found at N126 and N199. E225 is a binding site for substrate. N326 carries N-linked (GlcNAc...) asparagine glycosylation. 359–363 provides a ligand contact to substrate; that stretch reads GAMEN. H395 serves as a coordination point for Zn(2+). Residue E396 is the Proton acceptor of the active site. Zn(2+) contacts are provided by H399 and E418. N-linked (GlcNAc...) asparagine glycans are attached at residues N556, N569, N599, N643, N647, N679, N764, N797, N802, and N829. R888 provides a ligand contact to substrate.

The protein belongs to the peptidase M1 family. As to quaternary structure, homodimer; disulfide-linked. Zn(2+) serves as cofactor.

It is found in the cell membrane. The catalysed reaction is Release of N-terminal glutamate (and to a lesser extent aspartate) from a peptide.. With respect to regulation, substrate specificity is modulated by calcium which enhances the enzymatic activity for cleavage of acidic residues while reducing its activity with basic residues. Inhibited by aminopeptidase inhibitors amastatin and bestatin. In terms of biological role, regulates central hypertension through its calcium-modulated preference to cleave N-terminal acidic residues from peptides such as angiotensin II. The sequence is that of Glutamyl aminopeptidase (ENPEP) from Bos taurus (Bovine).